A 260-amino-acid chain; its full sequence is Phosphate import ATP-binding protein PstB 1 (260 aa).

Residues 8–255 enclose the ABC transporter domain; it reads TETKNVYDVL…PEHKRTEDYV (248 aa). Residue 46 to 53 participates in ATP binding; it reads GPSGCGKS.

This sequence belongs to the ABC transporter superfamily. Phosphate importer (TC 3.A.1.7) family. In terms of assembly, the complex is composed of two ATP-binding proteins (PstB), two transmembrane proteins (PstC and PstA) and a solute-binding protein (PstS).

The protein localises to the cell membrane. The catalysed reaction is phosphate(out) + ATP + H2O = ADP + 2 phosphate(in) + H(+). Its function is as follows. Part of the ABC transporter complex PstSACB involved in phosphate import. Responsible for energy coupling to the transport system. The sequence is that of Phosphate import ATP-binding protein PstB 1 from Shouchella clausii (strain KSM-K16) (Alkalihalobacillus clausii).